The chain runs to 263 residues: Putative TATA-binding protein pB263R (263 aa).

The protein belongs to the asfivirus B263R family.

Its function is as follows. Putative TATA-binding protein. The sequence is that of Putative TATA-binding protein pB263R from African swine fever virus (isolate Tick/Malawi/Lil 20-1/1983) (ASFV).